A 109-amino-acid chain; its full sequence is Nucleoid-associated protein Ldb1634 (109 aa).

A disordered region spans residues 18–40 (MMKQAKKLQEQMAQEQENITTQE).

The protein belongs to the YbaB/EbfC family. Homodimer.

It localises to the cytoplasm. The protein localises to the nucleoid. Binds to DNA and alters its conformation. May be involved in regulation of gene expression, nucleoid organization and DNA protection. This chain is Nucleoid-associated protein Ldb1634, found in Lactobacillus delbrueckii subsp. bulgaricus (strain ATCC 11842 / DSM 20081 / BCRC 10696 / JCM 1002 / NBRC 13953 / NCIMB 11778 / NCTC 12712 / WDCM 00102 / Lb 14).